A 527-amino-acid polypeptide reads, in one-letter code: Neutrophil cytosol factor 2 (527 aa).

TPR repeat units follow at residues 37 to 70 (SRIC…DKHL), 71 to 104 (AVSY…LRGN), and 121 to 154 (CEVL…KSEP). Threonine 233 is subject to Phosphothreonine. Residues 240 to 299 (LEGEAHRVLFGFVPETPEELQVMPGNIVFVLKKGNDNWATVMFNGQKGLVPCNYLEPVEL) enclose the SH3 1 domain. A disordered region spans residues 304 to 345 (QQQPQEETSLESDIPAPPSSSAPGRPQLSPGQKGKEEPKQEI). Serine 324 bears the Phosphoserine mark. Positions 336-345 (KGKEEPKQEI) are enriched in basic and acidic residues. The region spanning 352–430 (SYTLKVHYKY…YCLTLWCENT (79 aa)) is the PB1 domain. Serine 400 is subject to Phosphoserine. Residues 434 to 457 (QGFPDEPEESKKSDANNQTTEPEL) are disordered. In terms of domain architecture, SH3 2 spans 458-517 (KEGSKVVALFSYEATQPEDLEFLEGDVILVISTVNEQWLEGECKGKVGIFPKAFVEQHPT).

The protein belongs to the NCF2/NOXA1 family. In terms of assembly, component of the phagocyte NADPH oxidase complex composed of an obligatory core heterodimer formed by the membrane proteins CYBA and CYBB and the cytosolic regulatory subunits NCF1/p47-phox, NCF2/p67-phox, NCF4/p40-phox and the small GTPase RAC1 or RAC2. Part of a cytosolic complex composed at least by NCF1, NCF2 and NCF4. Interacts with NCF4. Interacts (via the C-terminal SH3 domain) with NCF1 (via C-terminus). Interacts with SYTL1 and RAC1. May interact with NOXO1. Interacts with S100A8 and calprotectin (S100A8/9). Interacts with GBP7 (via GB1/RHD3-type G domain). Interacts with CYBB; the interaction is enhanced in the presence of GBP7.

It is found in the cytoplasm. Subunit of the phagocyte NADPH oxidase complex that mediates the transfer of electrons from cytosolic NADPH to O2 to produce the superoxide anion (O2(-)). In the activated complex, electrons are first transferred from NADPH to flavin adenine dinucleotide (FAD) and subsequently transferred via two heme molecules to molecular oxygen, producing superoxide through an outer-sphere reaction. Activation of the NADPH oxidase complex is initiated by the assembly of cytosolic subunits of the NADPH oxidase complex with the core NADPH oxidase complex to form a complex at the plasma membrane or phagosomal membrane. This activation process is initiated by phosphorylation dependent binding of the cytosolic NCF1/p47-phox subunit to the C-terminus of CYBA/p22-phox. The chain is Neutrophil cytosol factor 2 from Bos taurus (Bovine).